The sequence spans 117 residues: Large ribosomal subunit protein bL20 (117 aa).

Belongs to the bacterial ribosomal protein bL20 family.

Its function is as follows. Binds directly to 23S ribosomal RNA and is necessary for the in vitro assembly process of the 50S ribosomal subunit. It is not involved in the protein synthesizing functions of that subunit. The protein is Large ribosomal subunit protein bL20 of Histophilus somni (strain 129Pt) (Haemophilus somnus).